The following is a 338-amino-acid chain: Ketol-acid reductoisomerase (NADP(+)) (338 aa).

A KARI N-terminal Rossmann domain is found at 1–181 (MKVFYDKDAD…GGGRAGIIET (181 aa)). Residues 24–27 (YGSQ), Arg47, and Ser52 contribute to the NADP(+) site. The active site involves His107. Gly133 provides a ligand contact to NADP(+). A KARI C-terminal knotted domain is found at 182–327 (NFREETETDL…SKLRAMMPWI (146 aa)). 4 residues coordinate Mg(2+): Asp190, Glu194, Glu226, and Glu230. Ser251 lines the substrate pocket.

It belongs to the ketol-acid reductoisomerase family. It depends on Mg(2+) as a cofactor.

The catalysed reaction is (2R)-2,3-dihydroxy-3-methylbutanoate + NADP(+) = (2S)-2-acetolactate + NADPH + H(+). The enzyme catalyses (2R,3R)-2,3-dihydroxy-3-methylpentanoate + NADP(+) = (S)-2-ethyl-2-hydroxy-3-oxobutanoate + NADPH + H(+). It participates in amino-acid biosynthesis; L-isoleucine biosynthesis; L-isoleucine from 2-oxobutanoate: step 2/4. Its pathway is amino-acid biosynthesis; L-valine biosynthesis; L-valine from pyruvate: step 2/4. Involved in the biosynthesis of branched-chain amino acids (BCAA). Catalyzes an alkyl-migration followed by a ketol-acid reduction of (S)-2-acetolactate (S2AL) to yield (R)-2,3-dihydroxy-isovalerate. In the isomerase reaction, S2AL is rearranged via a Mg-dependent methyl migration to produce 3-hydroxy-3-methyl-2-ketobutyrate (HMKB). In the reductase reaction, this 2-ketoacid undergoes a metal-dependent reduction by NADPH to yield (R)-2,3-dihydroxy-isovalerate. This chain is Ketol-acid reductoisomerase (NADP(+)), found in Burkholderia mallei (strain NCTC 10229).